The primary structure comprises 217 residues: Probable transaldolase (217 aa).

Lys83 (schiff-base intermediate with substrate) is an active-site residue.

It belongs to the transaldolase family. Type 3B subfamily.

The protein resides in the cytoplasm. It carries out the reaction D-sedoheptulose 7-phosphate + D-glyceraldehyde 3-phosphate = D-erythrose 4-phosphate + beta-D-fructose 6-phosphate. It participates in carbohydrate degradation; pentose phosphate pathway; D-glyceraldehyde 3-phosphate and beta-D-fructose 6-phosphate from D-ribose 5-phosphate and D-xylulose 5-phosphate (non-oxidative stage): step 2/3. In terms of biological role, transaldolase is important for the balance of metabolites in the pentose-phosphate pathway. The chain is Probable transaldolase from Erythrobacter litoralis (strain HTCC2594).